The sequence spans 559 residues: NAD(P)H-quinone oxidoreductase chain 4-2 (559 aa).

14 helical membrane passes run 5–25, 35–55, 86–106, 114–134, 136–156, 168–188, 207–227, 242–262, 274–294, 310–330, 331–351, 374–394, 417–437, and 488–508; these read FPWL…IPLI, WYAL…FWTN, ISMP…FAAW, LFYF…VAQD, LLLF…VCIW, FLLY…GLAF, IALE…KLAI, SAPV…YGLI, VYFA…GGFS, VSHM…GISG, AMLQ…LAGV, VFAL…MSGF, VTVF…LSML, and VFIA…PKLA.

The protein belongs to the complex I subunit 4 family.

It localises to the cellular thylakoid membrane. The enzyme catalyses a plastoquinone + NADH + (n+1) H(+)(in) = a plastoquinol + NAD(+) + n H(+)(out). It catalyses the reaction a plastoquinone + NADPH + (n+1) H(+)(in) = a plastoquinol + NADP(+) + n H(+)(out). Its function is as follows. NDH-1 shuttles electrons from NAD(P)H, via FMN and iron-sulfur (Fe-S) centers, to quinones in the respiratory chain. The immediate electron acceptor for the enzyme in this species is believed to be plastoquinone. Couples the redox reaction to proton translocation (for every two electrons transferred, four hydrogen ions are translocated across the cytoplasmic membrane), and thus conserves the redox energy in a proton gradient. The protein is NAD(P)H-quinone oxidoreductase chain 4-2 (ndhD2) of Synechocystis sp. (strain ATCC 27184 / PCC 6803 / Kazusa).